The chain runs to 183 residues: Dual-action ribosomal maturation protein DarP (183 aa).

This sequence belongs to the DarP family.

The protein localises to the cytoplasm. Its function is as follows. Member of a network of 50S ribosomal subunit biogenesis factors which assembles along the 30S-50S interface, preventing incorrect 23S rRNA structures from forming. Promotes peptidyl transferase center (PTC) maturation. The protein is Dual-action ribosomal maturation protein DarP of Citrobacter koseri (strain ATCC BAA-895 / CDC 4225-83 / SGSC4696).